Consider the following 315-residue polypeptide: Cysteine synthase (315 aa).

Residues Asn-8 and Arg-35 each contribute to the hydrogen sulfide site. Residue Lys-42 is modified to N6-(pyridoxal phosphate)lysine. Residues Asn-72 and 177-181 (GTGGT) contribute to the pyridoxal 5'-phosphate site. Position 269 (Leu-269) interacts with hydrogen sulfide. Residue Ser-273 coordinates pyridoxal 5'-phosphate.

Belongs to the cysteine synthase/cystathionine beta-synthase family. In terms of assembly, homodimer. Requires pyridoxal 5'-phosphate as cofactor.

It carries out the reaction O-acetyl-L-serine + hydrogen sulfide = L-cysteine + acetate. The protein operates within amino-acid biosynthesis; L-cysteine biosynthesis; L-cysteine from L-serine: step 2/2. The polypeptide is Cysteine synthase (cysK) (Buchnera aphidicola subsp. Acyrthosiphon pisum (strain APS) (Acyrthosiphon pisum symbiotic bacterium)).